The following is a 428-amino-acid chain: Dihydroorotase (428 aa).

Zn(2+)-binding residues include His-56 and His-58. Substrate contacts are provided by residues 58 to 60 (HLR) and Asn-90. Residues Asp-150, His-177, and His-230 each contribute to the Zn(2+) site. Asn-276 serves as a coordination point for substrate. Residue Asp-303 participates in Zn(2+) binding. Residue Asp-303 is part of the active site. His-307 lines the substrate pocket.

The protein belongs to the metallo-dependent hydrolases superfamily. DHOase family. Class I DHOase subfamily. The cofactor is Zn(2+).

It catalyses the reaction (S)-dihydroorotate + H2O = N-carbamoyl-L-aspartate + H(+). It participates in pyrimidine metabolism; UMP biosynthesis via de novo pathway; (S)-dihydroorotate from bicarbonate: step 3/3. Its function is as follows. Catalyzes the reversible cyclization of carbamoyl aspartate to dihydroorotate. This chain is Dihydroorotase, found in Streptomyces coelicolor (strain ATCC BAA-471 / A3(2) / M145).